A 373-amino-acid chain; its full sequence is CXADR-like membrane protein (373 aa).

The N-terminal stretch at 1 to 17 (MSLFFLWLVSYYVGTLG) is a signal peptide. 2 consecutive Ig-like C2-type domains span residues 18-126 (THTE…VILK) and 134-223 (PKCE…VRVT). Residues 18–234 (THTEIKRVAE…QYVQSIGMVA (217 aa)) lie on the Extracellular side of the membrane. 2 cysteine pairs are disulfide-bonded: Cys-34–Cys-110 and Cys-152–Cys-207. 2 N-linked (GlcNAc...) asparagine glycosylation sites follow: Asn-73 and Asn-196. Residues 235–255 (GAVTGIVAGALLIFLLIWLLI) form a helical membrane-spanning segment. The Cytoplasmic portion of the chain corresponds to 256-373 (RRKSKDRYEE…PSQSKAFQTV (118 aa)). A compositionally biased stretch (basic and acidic residues) spans 263–280 (YEEEDRPNEIREDAEAPR). Residues 263-373 (YEEEDRPNEI…PSQSKAFQTV (111 aa)) are disordered. Composition is skewed to low complexity over residues 287–313 (SSSS…ASRS), 321–332 (AAPQQPGLAPQA), and 353–363 (LTKAETTLSTT). The span at 364 to 373 (PSQSKAFQTV) shows a compositional bias: polar residues.

In terms of tissue distribution, predominantly expressed in epithelial cells within different tissues and in the white adipose tissue. Expressed at high levels in the heart and brain, at intermediate levels in the lung, skeletal muscle, kidney and testis and at low levels in the liver and spleen.

The protein localises to the cell junction. It localises to the tight junction. Its subcellular location is the cell membrane. In terms of biological role, may be involved in the cell-cell adhesion. May play a role in adipocyte differentiation and development of obesity. Is required for normal small intestine development. This is CXADR-like membrane protein (Clmp) from Mus musculus (Mouse).